A 542-amino-acid chain; its full sequence is CTP synthase (542 aa).

The interval 1–265 (MTRFIFITGG…DVQVCRHFHL (265 aa)) is amidoligase domain. Residue Ser-13 participates in CTP binding. Ser-13 serves as a coordination point for UTP. Residues 14–19 (SLGKGL) and Asp-71 contribute to the ATP site. Residues Asp-71 and Glu-139 each contribute to the Mg(2+) site. Residues 146–148 (DIE), 186–191 (KTKPTQ), and Lys-222 each bind CTP. Residues 186–191 (KTKPTQ) and Lys-222 each bind UTP. The Glutamine amidotransferase type-1 domain occupies 291–541 (TIAVVGKYTS…VQAAITQSRL (251 aa)). Gly-353 lines the L-glutamine pocket. Residue Cys-380 is the Nucleophile; for glutamine hydrolysis of the active site. L-glutamine contacts are provided by residues 381–384 (FGMQ), Glu-404, and Arg-469. Residues His-514 and Glu-516 contribute to the active site.

It belongs to the CTP synthase family. Homotetramer.

The enzyme catalyses UTP + L-glutamine + ATP + H2O = CTP + L-glutamate + ADP + phosphate + 2 H(+). It catalyses the reaction L-glutamine + H2O = L-glutamate + NH4(+). The catalysed reaction is UTP + NH4(+) + ATP = CTP + ADP + phosphate + 2 H(+). It functions in the pathway pyrimidine metabolism; CTP biosynthesis via de novo pathway; CTP from UDP: step 2/2. With respect to regulation, allosterically activated by GTP, when glutamine is the substrate; GTP has no effect on the reaction when ammonia is the substrate. The allosteric effector GTP functions by stabilizing the protein conformation that binds the tetrahedral intermediate(s) formed during glutamine hydrolysis. Inhibited by the product CTP, via allosteric rather than competitive inhibition. Its function is as follows. Catalyzes the ATP-dependent amination of UTP to CTP with either L-glutamine or ammonia as the source of nitrogen. Regulates intracellular CTP levels through interactions with the four ribonucleotide triphosphates. In Rhodospirillum rubrum (strain ATCC 11170 / ATH 1.1.1 / DSM 467 / LMG 4362 / NCIMB 8255 / S1), this protein is CTP synthase.